The following is a 701-amino-acid chain: Elongation factor G 2 (701 aa).

Residues Asn-8–Ala-290 enclose the tr-type G domain. GTP is bound by residues Ala-17–Thr-24, Asp-88–His-92, and Asn-142–Asp-145.

Belongs to the TRAFAC class translation factor GTPase superfamily. Classic translation factor GTPase family. EF-G/EF-2 subfamily.

It localises to the cytoplasm. Its function is as follows. Catalyzes the GTP-dependent ribosomal translocation step during translation elongation. During this step, the ribosome changes from the pre-translocational (PRE) to the post-translocational (POST) state as the newly formed A-site-bound peptidyl-tRNA and P-site-bound deacylated tRNA move to the P and E sites, respectively. Catalyzes the coordinated movement of the two tRNA molecules, the mRNA and conformational changes in the ribosome. This chain is Elongation factor G 2, found in Pseudoalteromonas atlantica (strain T6c / ATCC BAA-1087).